We begin with the raw amino-acid sequence, 315 residues long: Ribose-phosphate pyrophosphokinase (315 aa).

Residues 41-43 and 100-101 contribute to the ATP site; these read DGE and RQ. Histidine 134 and aspartate 173 together coordinate Mg(2+). Lysine 196 is an active-site residue. D-ribose 5-phosphate contacts are provided by residues arginine 198, aspartate 222, and 226–230; that span reads DTAGT.

Belongs to the ribose-phosphate pyrophosphokinase family. Class I subfamily. As to quaternary structure, homohexamer. It depends on Mg(2+) as a cofactor.

The protein resides in the cytoplasm. The catalysed reaction is D-ribose 5-phosphate + ATP = 5-phospho-alpha-D-ribose 1-diphosphate + AMP + H(+). It participates in metabolic intermediate biosynthesis; 5-phospho-alpha-D-ribose 1-diphosphate biosynthesis; 5-phospho-alpha-D-ribose 1-diphosphate from D-ribose 5-phosphate (route I): step 1/1. In terms of biological role, involved in the biosynthesis of the central metabolite phospho-alpha-D-ribosyl-1-pyrophosphate (PRPP) via the transfer of pyrophosphoryl group from ATP to 1-hydroxyl of ribose-5-phosphate (Rib-5-P). This chain is Ribose-phosphate pyrophosphokinase, found in Bacillus caldolyticus.